Consider the following 243-residue polypeptide: UPF0246 protein SUB1767 (243 aa).

It belongs to the UPF0246 family.

In Streptococcus uberis (strain ATCC BAA-854 / 0140J), this protein is UPF0246 protein SUB1767.